The primary structure comprises 256 residues: Protein crossbronx-like (256 aa).

Residues Asn-17–Lys-179 enclose the UBC core domain.

This sequence belongs to the ubiquitin-conjugating enzyme family. FTS subfamily.

This chain is Protein crossbronx-like, found in Drosophila mojavensis (Fruit fly).